The following is a 293-amino-acid chain: Aminodeoxychorismate lyase (293 aa).

Position 146 is an N6-(pyridoxal phosphate)lysine (Lys-146).

This sequence belongs to the class-IV pyridoxal-phosphate-dependent aminotransferase family. Homodimer. Pyridoxal 5'-phosphate serves as cofactor.

The catalysed reaction is 4-amino-4-deoxychorismate = 4-aminobenzoate + pyruvate + H(+). It functions in the pathway cofactor biosynthesis; tetrahydrofolate biosynthesis; 4-aminobenzoate from chorismate: step 2/2. Functionally, involved in the biosynthesis of p-aminobenzoate (PABA), a precursor of tetrahydrofolate. Converts 4-amino-4-deoxychorismate into 4-aminobenzoate (PABA) and pyruvate. The chain is Aminodeoxychorismate lyase from Bacillus subtilis (strain 168).